The following is a 1678-amino-acid chain: Serine/threonine-protein kinase pakD (1678 aa).

Positions 1-15 (MSRLQPQQQQRGRSS) are enriched in low complexity. 4 disordered regions span residues 1–73 (MSRL…NNKF), 180–224 (NSNS…PNKN), 262–428 (QLSS…NNNN), and 442–489 (KRKS…SQSS). Over residues 17–34 (FKDNFQIQKPLQSLTPSE) the composition is skewed to polar residues. 2 stretches are compositionally biased toward low complexity: residues 35-73 (QQQQ…NNKF) and 180-214 (NSNS…NNNN). A Calponin-homology (CH) domain is found at 82 to 189 (KNVENDIKKW…NSNSSKTTTN (108 aa)). The span at 215–224 (RAIITSPNKN) shows a compositional bias: polar residues. 2 stretches are compositionally biased toward low complexity: residues 276 to 359 (NNNN…NINN) and 399 to 428 (NNNN…NNNN). Over residues 460-472 (DSSDSSDSSDSDS) the composition is skewed to acidic residues. Coiled coils occupy residues 512-542 (KQDK…KKLL) and 570-628 (TRQI…YANT). 3 stretches are compositionally biased toward low complexity: residues 631–654 (SSNS…INGS), 662–671 (NSSTSKGTLS), and 695–713 (NSHQ…QTTS). Disordered stretches follow at residues 631–672 (SSNS…TLSR) and 693–722 (PVNS…ASYN). Residues 752 to 862 (VSATLQQKQQ…QNQQINNLID (111 aa)) adopt a coiled-coil conformation. A Phorbol-ester/DAG-type zinc finger spans residues 1141 to 1197 (PHSFVLKSFRIISECNYCRQYIWGVRGIVAREAFECVGCKYKTHKKCLKEASEKTFC). A CRIB domain is found at 1202–1215 (VGAPFNVKHEMHVG). 2 disordered regions span residues 1267–1292 (LTNN…QQNQ) and 1323–1346 (NNTY…PNNN). Residues 1269 to 1309 (NNSNNNNNNNNSNNNLQQQQQQNQQLKQKLNITNNQQNNTI) are a coiled coil. The Protein kinase domain occupies 1376 to 1647 (YKVREVVGGG…AHYLLRHPFL (272 aa)). ATP is bound by residues 1382 to 1390 (VGGGSTGKV) and K1405. D1515 (proton acceptor) is an active-site residue.

It belongs to the protein kinase superfamily. STE Ser/Thr protein kinase family. STE20 subfamily. Requires Mg(2+) as cofactor.

The catalysed reaction is L-seryl-[protein] + ATP = O-phospho-L-seryl-[protein] + ADP + H(+). It carries out the reaction L-threonyl-[protein] + ATP = O-phospho-L-threonyl-[protein] + ADP + H(+). This is Serine/threonine-protein kinase pakD from Dictyostelium discoideum (Social amoeba).